The sequence spans 138 residues: Basic phospholipase A2 chain HDP-1P (138 aa).

A signal peptide spans 1 to 16 (MRILWIVAVCLIGVEG). Cystine bridges form between cysteine 42–cysteine 131, cysteine 44–cysteine 60, cysteine 59–cysteine 111, cysteine 65–cysteine 138, cysteine 66–cysteine 104, cysteine 73–cysteine 97, and cysteine 91–cysteine 102. Residues tyrosine 43, glycine 45, and glycine 47 each contribute to the Ca(2+) site. Histidine 63 is an active-site residue. Aspartate 64 serves as a coordination point for Ca(2+). The active site involves aspartate 105.

As to quaternary structure, heterodimer; non-covalently linked. The toxic basic protein has phospholipase A2 activity (chain HDP-1P) and the non-toxic acidic protein functions as its inhibitor (chain HPD-1I (AC A4VBF0)). The cofactor is Ca(2+). Expressed by the venom gland.

It is found in the secreted. It catalyses the reaction a 1,2-diacyl-sn-glycero-3-phosphocholine + H2O = a 1-acyl-sn-glycero-3-phosphocholine + a fatty acid + H(+). Its activity is regulated as follows. Enzymatic activity and neurotoxicity are inhibited by Triton X-100, which has been determined to be located in the center of the hydrophobic channel of the enzyme. Heterodimer: shows the same activities as the monomer, but with a lower potency. In terms of biological role, monomer: snake venom phospholipase A2 (PLA2) that shows presynaptic neurotoxicity, anticoagulant activity and that weakly inhibits ADP-induced platelet aggregation. Inhibits exocytosis in pancreatic beta cells, confirming it can act presynaptically in inhibiting the exocytosis of neurotransmitters in neurons. PLA2 catalyzes the calcium-dependent hydrolysis of the 2-acyl groups in 3-sn-phosphoglycerides. The sequence is that of Basic phospholipase A2 chain HDP-1P from Vipera nikolskii (Nikolsky's adder).